The following is a 1711-amino-acid chain: Nuclear pore complex protein Nup214 (1711 aa).

8 repeat units span residues 472 to 473, 486 to 487, 497 to 498, 511 to 512, 514 to 515, 535 to 536, 588 to 589, and 598 to 599. Residues 472-1703 are 45 X 2 AA repeats of F-G; that stretch reads FGAAAAKAPA…NSNAQKPAFG (1232 aa). Leucine-zipper regions lie at residues 650-672 and 767-788; these read LDDL…VQGL and LTRL…KSKL. A disordered region spans residues 886–905; the sequence is KPATANKYTQAAVAPPSPPD. Repeat unit 9 spans residues 1009 to 1010; that stretch reads FG. Positions 1012–1081 are disordered; the sequence is GSPAVAAPTP…NKSFGFGGFT (70 aa). Basic and acidic residues-rich tracts occupy residues 1037–1051 and 1058–1072; these read TKPK…KEFK and EESK…ETEN. Positions 1044-1711 are interaction with emb; that stretch reads AAESKEFKAV…FGGSSFMNYR (668 aa). Tandem repeats lie at residues 1075 to 1076, 1077 to 1078, 1097 to 1098, 1106 to 1107, 1135 to 1136, 1218 to 1219, 1229 to 1230, and 1240 to 1241. Positions 1251–1261 are enriched in polar residues; it reads TSVTEANNKTD. Residues 1251–1270 are disordered; it reads TSVTEANNKTDPISTTPSAI. Tandem repeats lie at residues 1356–1357, 1388–1389, 1399–1400, 1434–1435, 1449–1450, 1458–1459, 1472–1473, 1481–1482, 1487–1488, 1507–1508, 1512–1513, 1539–1540, 1547–1548, 1562–1563, 1571–1572, 1584–1585, 1588–1589, 1601–1602, 1617–1618, 1623–1624, 1629–1630, 1635–1636, 1641–1642, 1647–1648, 1650–1651, 1662–1663, and 1686–1687. Disordered regions lie at residues 1533-1552 and 1557-1614; these read SPQA…SPAT and SGGS…TTTP. Composition is skewed to gly residues over residues 1560-1572 and 1582-1595; these read SIFG…GGFG and GGFG…GGGS. Over residues 1596-1614 the composition is skewed to low complexity; it reads VAQTGFGSPQAPQQQTTTP. The span at 1688-1698 shows a compositional bias: polar residues; that stretch reads NLAQTGNSNAQ. A disordered region spans residues 1688–1711; sequence NLAQTGNSNAQKPAFGGSSFMNYR. Copy 45 of the repeat occupies 1702–1703; the sequence is FG.

As to quaternary structure, component of the nuclear pore complex. Interacts with mbo/Nup88 and (via C-terminus) with emb to attenuate emb-mediated protein export.

It localises to the nucleus. The protein localises to the nuclear pore complex. The protein resides in the nucleus membrane. Functionally, part of the nuclear pore complex. Serves as a docking site in the receptor-mediated import of substrates across the nuclear pore complex including emb, RanGAP and phosphorylated Mad. Protects mbo/Nup88 from proteasomal degradation at the nuclear pore. Together with mbo/Nup88, sequesters emb in the cytoplasm and thereby attenuates nuclear export signal (NES)-mediated nuclear export. Together with mbo/Nup88, required for the nuclear import of the Rel family transcription factors dorsal (dl) and Dorsal-related immunity factor (Dif) and the activation of an immune response. This chain is Nuclear pore complex protein Nup214, found in Drosophila melanogaster (Fruit fly).